The sequence spans 389 residues: S-adenosylmethionine synthase (389 aa).

H15 serves as a coordination point for ATP. Residue D17 participates in Mg(2+) binding. Residue E43 coordinates K(+). L-methionine-binding residues include E56 and Q99. The tract at residues 99–109 is flexible loop; that stretch reads QSPDIAQGVNE. ATP contacts are provided by residues 166–168, 234–235, D243, 249–250, A266, and K270; these read DAK, RF, and RK. Residue D243 coordinates L-methionine. L-methionine is bound at residue K274.

Belongs to the AdoMet synthase family. In terms of assembly, homotetramer; dimer of dimers. Mg(2+) serves as cofactor. The cofactor is K(+).

Its subcellular location is the cytoplasm. It carries out the reaction L-methionine + ATP + H2O = S-adenosyl-L-methionine + phosphate + diphosphate. The protein operates within amino-acid biosynthesis; S-adenosyl-L-methionine biosynthesis; S-adenosyl-L-methionine from L-methionine: step 1/1. Functionally, catalyzes the formation of S-adenosylmethionine (AdoMet) from methionine and ATP. The overall synthetic reaction is composed of two sequential steps, AdoMet formation and the subsequent tripolyphosphate hydrolysis which occurs prior to release of AdoMet from the enzyme. This is S-adenosylmethionine synthase from Neisseria meningitidis serogroup A / serotype 4A (strain DSM 15465 / Z2491).